The following is a 351-amino-acid chain: Glycerol-1-phosphate dehydrogenase [NAD(P)+] (351 aa).

NAD(+) is bound by residues 97–101 (GKVID) and 119–122 (TSPS). D124 is a substrate binding site. An NAD(+)-binding site is contributed by S128. D171 contributes to the substrate binding site. Zn(2+)-binding residues include D171 and H251. Substrate is bound at residue H255. Zn(2+) is bound at residue H267.

The protein belongs to the glycerol-1-phosphate dehydrogenase family. As to quaternary structure, homodimer. Requires Zn(2+) as cofactor.

The protein resides in the cytoplasm. It catalyses the reaction sn-glycerol 1-phosphate + NAD(+) = dihydroxyacetone phosphate + NADH + H(+). It carries out the reaction sn-glycerol 1-phosphate + NADP(+) = dihydroxyacetone phosphate + NADPH + H(+). Its pathway is membrane lipid metabolism; glycerophospholipid metabolism. Functionally, catalyzes the NAD(P)H-dependent reduction of dihydroxyacetonephosphate (DHAP or glycerone phosphate) to glycerol 1-phosphate (G1P). The G1P thus generated is used as the glycerophosphate backbone of phospholipids in the cellular membranes of Archaea. The chain is Glycerol-1-phosphate dehydrogenase [NAD(P)+] from Saccharolobus islandicus (strain L.S.2.15 / Lassen #1) (Sulfolobus islandicus).